The sequence spans 72 residues: MSKTDVVEIEGTVIEKLPNAMFSVELENGHRVLAHISGKLRMNFIKIVPGDKVTLELSPYDLTKGRIIWRDK.

In terms of domain architecture, S1-like spans 1–72 (MSKTDVVEIE…TKGRIIWRDK (72 aa)).

Belongs to the IF-1 family. In terms of assembly, component of the 30S ribosomal translation pre-initiation complex which assembles on the 30S ribosome in the order IF-2 and IF-3, IF-1 and N-formylmethionyl-tRNA(fMet); mRNA recruitment can occur at any time during PIC assembly.

It is found in the cytoplasm. Its function is as follows. One of the essential components for the initiation of protein synthesis. Stabilizes the binding of IF-2 and IF-3 on the 30S subunit to which N-formylmethionyl-tRNA(fMet) subsequently binds. Helps modulate mRNA selection, yielding the 30S pre-initiation complex (PIC). Upon addition of the 50S ribosomal subunit IF-1, IF-2 and IF-3 are released leaving the mature 70S translation initiation complex. The sequence is that of Translation initiation factor IF-1 from Lachnoclostridium phytofermentans (strain ATCC 700394 / DSM 18823 / ISDg) (Clostridium phytofermentans).